We begin with the raw amino-acid sequence, 270 residues long: tRNA (guanine-N(1)-)-methyltransferase (270 aa).

Residues Gly117 and 137 to 142 (IGDYVL) each bind S-adenosyl-L-methionine.

This sequence belongs to the RNA methyltransferase TrmD family. As to quaternary structure, homodimer.

The protein resides in the cytoplasm. It catalyses the reaction guanosine(37) in tRNA + S-adenosyl-L-methionine = N(1)-methylguanosine(37) in tRNA + S-adenosyl-L-homocysteine + H(+). Specifically methylates guanosine-37 in various tRNAs. This chain is tRNA (guanine-N(1)-)-methyltransferase, found in Heliobacterium modesticaldum (strain ATCC 51547 / Ice1).